A 154-amino-acid chain; its full sequence is Superoxide dismutase [Cu-Zn] (154 aa).

Residues His47, His49, and His64 each coordinate Cu cation. Cysteines 58 and 147 form a disulfide. Zn(2+) is bound by residues His64, His72, His81, and Asp84. His121 is a binding site for Cu cation. Residues Asp125–Lys137 are compositionally biased toward basic and acidic residues. The segment at Asp125–Cys147 is disordered. Arg144 contacts substrate.

In terms of assembly, homodimer. The cofactor is Cu cation. Zn(2+) serves as cofactor.

It localises to the cytoplasm. It catalyses the reaction 2 superoxide + 2 H(+) = H2O2 + O2. Its function is as follows. Destroys radicals which are normally produced within the cells and which are toxic to biological systems. The chain is Superoxide dismutase [Cu-Zn] from Aspergillus niger.